The following is a 224-amino-acid chain: Cardosin-E (224 aa).

The 221-residue stretch at 1–221 (DSGSAIVALT…DYGNLLVGFA (221 aa)) folds into the Peptidase A1 domain. Asp-35 is a catalytic residue. A disulfide bond links Cys-125 and Cys-129. Residue Asp-134 is part of the active site.

It belongs to the peptidase A1 family. In terms of assembly, heterodimer of a light chain and a heavy chain. An intermediate form is produced first, and undergoes proteolytic processing to remove the internal plant-specific insert (PSI) and the propeptide. Post-translationally, N-glycosylated. In terms of tissue distribution, pistils.

It is found in the microsome membrane. It localises to the protein storage vacuole. The protein resides in the secreted. Its subcellular location is the cell wall. The protein localises to the extracellular space. It is found in the extracellular matrix. Inhibited by pepstatin. Functionally, aspartic protease with a high preference for bonds between hydrophobic residues. The polypeptide is Cardosin-E (Cynara cardunculus (Cardoon)).